The sequence spans 21 residues: MEWYPEAAANAERYTQIVWYK.

The protein belongs to the CRISP family. Post-translationally, contains 8 disulfide bonds. In terms of tissue distribution, expressed by the salivary gland.

It localises to the secreted. Functionally, helicopsin exhibits robust neurotoxic activity as shown by immediate death (about 8 minutes) of mice due to respiratory paralysis. The chain is Helicopsin from Helicops angulatus (South American water snake).